A 335-amino-acid polypeptide reads, in one-letter code: Probable G-protein coupled receptor 174 (335 aa).

Topologically, residues 1 to 27 are extracellular; it reads MTDNFTCNKTDGDNTDFRYFIYAVTYT. 2 N-linked (GlcNAc...) asparagine glycosylation sites follow: asparagine 4 and asparagine 8. A helical transmembrane segment spans residues 28 to 48; sequence VILVPGLIGNILALWVFYGYM. Topologically, residues 49 to 53 are cytoplasmic; it reads KETKR. The helical transmembrane segment at 54-74 threads the bilayer; that stretch reads AVVFMINLAIADLLQILSLPL. The Extracellular segment spans residues 75–91; the sequence is RIFYYLNHDWPFGPGLC. The cysteines at positions 91 and 168 are disulfide-linked. The chain crosses the membrane as a helical span at residues 92–112; it reads MFCFYLKYVNMYASIYFLVCI. Over 113–134 the chain is Cytoplasmic; sequence SVRRFWFLMYPFRFNDCKQKYD. The chain crosses the membrane as a helical span at residues 135–155; it reads LYISIIGWLIICLACLLFPLL. Over 156-182 the chain is Extracellular; sequence RTNDDTPGNRTKCFVDLPIRNVNLAQS. N-linked (GlcNAc...) asparagine glycosylation is present at asparagine 164. A helical membrane pass occupies residues 183 to 203; sequence VAMITIGEVVGFVTPLMIVLY. Over 204–231 the chain is Cytoplasmic; the sequence is CTWKTALSLQNKYPISQHLGEKKKALKM. A helical transmembrane segment spans residues 232-252; sequence ILTCAGVFLVCFVPYHFSFPL. Residues 253–268 are Extracellular-facing; it reads DFLVKSNEIKSCFARR. Residues 269–289 form a helical membrane-spanning segment; it reads VILIFHSVALCLASLNSCLDP. Over 290 to 335 the chain is Cytoplasmic; sequence VIYYFTTNEFRRRLSRQDLPDNIQLHTKSYKIASNHATSTVAAELC.

Belongs to the G-protein coupled receptor 1 family. In terms of assembly, interacts with GNA13. Interacts with CCL21. As to expression, expressed in spleen and, at low levels, in brain. Highly expressed in developing and mature regulatory T-cells.

It is found in the cell membrane. G-protein-coupled receptor of lysophosphatidylserine (LysoPS) that plays different roles in immune response. Plays a negative role in regulatory T-cell accumulation and homeostasis. Under inflammatory conditions where LysoPS production increases, contributes to the down-regulation of regulatory T-cell activity to favor effector response. Mediates the suppression of IL-2 production in activated T-lymphocytes leading to inhibition of growth, proliferation and differentiation of T-cells. Mechanistically, acts via G(s)-containing heterotrimeric G proteins to trigger elevated cyclic AMP levels and protein kinase A/PKA activity, which may in turn act to antagonize proximal TCR signaling. Plays an important role in the initial period of sepsis through the regulation of macrophage polarization and pro- and anti-inflammatory cytokine secretions. Upon testosterone treatment, acts as a receptor for CCL21 and subsequently triggers through G(q)-alpha and G(12)/G(13) proteins a calcium flux leading to chemotactic effects on activated B-cells. Signals via GNA13 and PKA to promote CD86 up-regulation by follicular B-cells. The polypeptide is Probable G-protein coupled receptor 174 (Gpr174) (Mus musculus (Mouse)).